The sequence spans 599 residues: Leishmanolysin (599 aa).

Positions 1–39 (MSVDSSSTHRHRSVAARLVRLAAAGAAVIAAVGTAAAWA) are cleaved as a signal peptide. A propeptide spans 40–97 (HAGAVQHRCIHDAMQARVRQSVARHHTAPGAVSAVGLPYVTLDTAAAADRRPGSAPTV) (activation peptide). Intrachain disulfides connect Cys-122-Cys-139 and Cys-188-Cys-227. His-261 serves as a coordination point for Zn(2+). Glu-262 is a catalytic residue. His-265 is a binding site for Zn(2+). Asn-297 is a glycosylation site (N-linked (GlcNAc...) asparagine). Intrachain disulfides connect Cys-311/Cys-383, Cys-390/Cys-452, Cys-403/Cys-422, Cys-412/Cys-486, Cys-463/Cys-507, Cys-512/Cys-562, and Cys-532/Cys-555. His-331 provides a ligand contact to Zn(2+). Asn-394 carries an N-linked (GlcNAc...) asparagine glycan. Asn-574 carries GPI-anchor amidated asparagine lipidation. Positions 575–599 (AAAGRRGPRAAATALLVAALLAVAL) are cleaved as a propeptide — removed in mature form.

This sequence belongs to the peptidase M8 family. Requires Zn(2+) as cofactor.

It localises to the cell membrane. The enzyme catalyses Preference for hydrophobic residues at P1 and P1' and basic residues at P2' and P3'. A model nonapeptide is cleaved at -Ala-Tyr-|-Leu-Lys-Lys-.. Its function is as follows. Has an integral role during the infection of macrophages in the mammalian host. The polypeptide is Leishmanolysin (gp63) (Leishmania chagasi).